The chain runs to 281 residues: MPELPEVETVRLGLTPALVGERLSRVAARRPALRLPIPVDLVQRLTGKVVGSLDRRAKYLLLRMIDGPVALIHLGMSGSMTVGPLAGHAEPGPHDHILFETEAGLRVTFRDPRRFGLITLAEPETLDDHPLLAKLGPEPLSEAFDAEVLVRRLNGRQAPIKAALLDQGVVAGLGNIYVSEALFRAGISPLRPAASVTGAWAEALVAAIRAVLGEAIAAGGSSLRDHRQTDGALGYFQHRFAVYDRVGQPCPGCDCDVARTGGIERMVQSGRSTFFCGRRQR.

The Schiff-base intermediate with DNA role is filled by Pro2. The active-site Proton donor is Glu3. Lys58 functions as the Proton donor; for beta-elimination activity in the catalytic mechanism. DNA-binding residues include His94, Arg113, and Arg156. An FPG-type; degenerate zinc finger spans residues 241–281; sequence AVYDRVGQPCPGCDCDVARTGGIERMVQSGRSTFFCGRRQR. Arg271 serves as the catalytic Proton donor; for delta-elimination activity.

This sequence belongs to the FPG family. In terms of assembly, monomer. Requires Zn(2+) as cofactor.

It catalyses the reaction Hydrolysis of DNA containing ring-opened 7-methylguanine residues, releasing 2,6-diamino-4-hydroxy-5-(N-methyl)formamidopyrimidine.. It carries out the reaction 2'-deoxyribonucleotide-(2'-deoxyribose 5'-phosphate)-2'-deoxyribonucleotide-DNA = a 3'-end 2'-deoxyribonucleotide-(2,3-dehydro-2,3-deoxyribose 5'-phosphate)-DNA + a 5'-end 5'-phospho-2'-deoxyribonucleoside-DNA + H(+). Involved in base excision repair of DNA damaged by oxidation or by mutagenic agents. Acts as a DNA glycosylase that recognizes and removes damaged bases. Has a preference for oxidized purines, such as 7,8-dihydro-8-oxoguanine (8-oxoG). Has AP (apurinic/apyrimidinic) lyase activity and introduces nicks in the DNA strand. Cleaves the DNA backbone by beta-delta elimination to generate a single-strand break at the site of the removed base with both 3'- and 5'-phosphates. In Rhodospirillum rubrum (strain ATCC 11170 / ATH 1.1.1 / DSM 467 / LMG 4362 / NCIMB 8255 / S1), this protein is Formamidopyrimidine-DNA glycosylase.